The chain runs to 280 residues: Dexamethasone-induced Ras-related protein 1 (280 aa).

Cys11 carries the S-nitrosocysteine modification. 31 to 38 lines the GTP pocket; the sequence is GSSKVGKT. An Effector region motif is present at residues 53-61; it reads YTPTIEDFH. Residues 78-82 and 145-148 each bind GTP; these read DTSGN and NKGD. Cys277 carries the post-translational modification Cysteine methyl ester. A lipid anchor (S-farnesyl cysteine) is attached at Cys277. Residues 278 to 280 constitute a propeptide, removed in mature form; sequence VIS.

The protein belongs to the small GTPase superfamily. RasD family. As to quaternary structure, component of a complex, at least composed of APBB1, RASD1/DEXRAS1 and APP. Interacts with APBB1/FE65. Forms a ternary complex with CAPON and NOS1. S-nitrosylation stimulates guanine-nucleotide exchange activity. In terms of tissue distribution, expressed in brain, heart, kidney and liver.

The protein resides in the cell membrane. The protein localises to the cytoplasm. Its subcellular location is the perinuclear region. It is found in the nucleus. Its function is as follows. Small GTPase. Negatively regulates the transcription regulation activity of the APBB1/FE65-APP complex via its interaction with APBB1/FE65. The sequence is that of Dexamethasone-induced Ras-related protein 1 (Rasd1) from Mus musculus (Mouse).